The primary structure comprises 384 residues: Neuropeptide Y receptor type 1 (384 aa).

Topologically, residues 1-44 (MNSTLFSQVENHSVHSNFSEKNAQLLAFENDDCHLPLAMIFTLA) are extracellular. Asn-2, Asn-11, and Asn-17 each carry an N-linked (GlcNAc...) asparagine glycan. Residues 45–65 (LAYGAVIILGVSGNLALIIII) traverse the membrane as a helical segment. Topologically, residues 66–76 (LKQKEMRNVTN) are cytoplasmic. The chain crosses the membrane as a helical span at residues 77 to 97 (ILIVNLSFSDLLVAIMCLPFT). Residues 98 to 116 (FVYTLMDHWVFGEAMCKLN) are Extracellular-facing. A disulfide bond links Cys-113 and Cys-198. Residues 117 to 137 (PFVQCVSITVSIFSLVLIAVE) form a helical membrane-spanning segment. Over 138–154 (RHQLIINPRGWRPNNRH) the chain is Cytoplasmic. The chain crosses the membrane as a helical span at residues 155 to 175 (AYVGIAVIWVLAVASSLPFLI). Residues 176–211 (YQVMTDEPFQNVTLDAYKDKYVCFDQFPSDSHRLSY) lie on the Extracellular side of the membrane. The chain crosses the membrane as a helical span at residues 212 to 232 (TTLLLVLQYFGPLCFIFICYF). Topologically, residues 233–260 (KIYIRLKRRNNMMDKMRDNKYRSSETKR) are cytoplasmic. A helical membrane pass occupies residues 261-281 (INIMLLSIVVAFAVCWLPLTI). At 282 to 299 (FNTVFDWNHQIIATCNHN) the chain is on the extracellular side. Residues 300–320 (LLFLLCHLTAMISTCVNPIFY) form a helical membrane-spanning segment. Residues 321–384 (GFLNKNFQRD…INNNDDNEKI (64 aa)) lie on the Cytoplasmic side of the membrane. Cys-338 is lipidated: S-palmitoyl cysteine. Ser-368 carries the post-translational modification Phosphoserine.

Belongs to the G-protein coupled receptor 1 family.

The protein localises to the cell membrane. Receptor for neuropeptide Y and peptide YY. The rank order of affinity of this receptor for pancreatic polypeptides is NPY &gt; [Pro-34] PYY, PYY and [Leu-31, Pro-34] NPY &gt; NPY (2-36) &gt; [Ile-31, Gln-34] PP and PYY (3-36) &gt; PP &gt; NPY free acid. This is Neuropeptide Y receptor type 1 (NPY1R) from Homo sapiens (Human).